The sequence spans 37 residues: Large ribosomal subunit protein bL36 (37 aa).

This sequence belongs to the bacterial ribosomal protein bL36 family.

The protein is Large ribosomal subunit protein bL36 of Borreliella afzelii (strain PKo) (Borrelia afzelii).